Reading from the N-terminus, the 63-residue chain is Large ribosomal subunit protein uL29 (63 aa).

This sequence belongs to the universal ribosomal protein uL29 family.

In Flavobacterium johnsoniae (strain ATCC 17061 / DSM 2064 / JCM 8514 / BCRC 14874 / CCUG 350202 / NBRC 14942 / NCIMB 11054 / UW101) (Cytophaga johnsonae), this protein is Large ribosomal subunit protein uL29.